A 1362-amino-acid polypeptide reads, in one-letter code: DNA-directed RNA polymerase subunit beta (1362 aa).

It belongs to the RNA polymerase beta chain family. In terms of assembly, the RNAP catalytic core consists of 2 alpha, 1 beta, 1 beta' and 1 omega subunit. When a sigma factor is associated with the core the holoenzyme is formed, which can initiate transcription.

The catalysed reaction is RNA(n) + a ribonucleoside 5'-triphosphate = RNA(n+1) + diphosphate. In terms of biological role, DNA-dependent RNA polymerase catalyzes the transcription of DNA into RNA using the four ribonucleoside triphosphates as substrates. This is DNA-directed RNA polymerase subunit beta from Acinetobacter baylyi (strain ATCC 33305 / BD413 / ADP1).